A 164-amino-acid chain; its full sequence is MTEQANNGGAASQNEQGAQFSLQRIYVRDLSFEAPKSPEIFRQEWNPSVALDLNTKQKQLESDFYEVVLTLSVTVKTGEEVAFIAEVQQAGIFLIKGLEAAAMSHTLGAFCPNILFPYAREALDSLVTRGSFPALMLAPVNFDALYAQEMARMQSAGEAPATAH.

This sequence belongs to the SecB family. Homotetramer, a dimer of dimers. One homotetramer interacts with 1 SecA dimer.

The protein localises to the cytoplasm. In terms of biological role, one of the proteins required for the normal export of preproteins out of the cell cytoplasm. It is a molecular chaperone that binds to a subset of precursor proteins, maintaining them in a translocation-competent state. It also specifically binds to its receptor SecA. The sequence is that of Protein-export protein SecB from Stutzerimonas stutzeri (strain A1501) (Pseudomonas stutzeri).